The following is a 125-amino-acid chain: Small ribosomal subunit protein eS8 (125 aa).

Residues M1–R23 are compositionally biased toward basic residues. Residues M1 to T34 are disordered.

It belongs to the eukaryotic ribosomal protein eS8 family. Part of the 30S ribosomal subunit.

In Methanococcoides burtonii (strain DSM 6242 / NBRC 107633 / OCM 468 / ACE-M), this protein is Small ribosomal subunit protein eS8.